The following is a 154-amino-acid chain: Superoxide dismutase [Cu-Zn] (154 aa).

Cu cation contacts are provided by H47, H49, and H64. A disulfide bond links C58 and C147. 4 residues coordinate Zn(2+): H64, H72, H81, and D84. Residue H121 coordinates Cu cation. R144 contacts substrate.

The protein belongs to the Cu-Zn superoxide dismutase family. As to quaternary structure, homodimer. Requires Cu cation as cofactor. It depends on Zn(2+) as a cofactor.

The protein resides in the cytoplasm. The protein localises to the mitochondrion. It is found in the cell membrane. The catalysed reaction is 2 superoxide + 2 H(+) = H2O2 + O2. Destroys radicals which are normally produced within the cells and which are toxic to biological systems. Destroys radicals produced by host defense mechanisms. This Cryptococcus neoformans var. grubii serotype A (strain H99 / ATCC 208821 / CBS 10515 / FGSC 9487) (Filobasidiella neoformans var. grubii) protein is Superoxide dismutase [Cu-Zn].